We begin with the raw amino-acid sequence, 277 residues long: Hemin import ATP-binding protein HmuV (277 aa).

Residues 19–259 (VEVADLNYSV…AIIEEAFGHR (241 aa)) enclose the ABC transporter domain. An ATP-binding site is contributed by 51 to 58 (GRNGAGKS).

It belongs to the ABC transporter superfamily. Heme (hemin) importer (TC 3.A.1.14.5) family. As to quaternary structure, the complex is composed of two ATP-binding proteins (HmuV), two transmembrane proteins (HmuU) and a solute-binding protein (HmuT).

The protein localises to the cell membrane. Functionally, part of the ABC transporter complex HmuTUV involved in hemin import. Responsible for energy coupling to the transport system. This Deinococcus geothermalis (strain DSM 11300 / CIP 105573 / AG-3a) protein is Hemin import ATP-binding protein HmuV.